Reading from the N-terminus, the 308-residue chain is Oligopeptide transport system permease protein AmiD (308 aa).

The next 6 membrane-spanning stretches (helical) occupy residues 43 to 63, 111 to 131, 145 to 167, 171 to 193, 234 to 254, and 274 to 294; these read TVVM…YPMF, ILIS…VGGI, VYNV…SIGA, NLIF…VQIL, MLPS…GLPI, and AYLF…LFVV. Residues 107–295 form the ABC transmembrane type-1 domain; the sequence is ARNSILISVI…LVSLSLFVVG (189 aa).

The protein belongs to the binding-protein-dependent transport system permease family. OppBC subfamily.

Its subcellular location is the cell membrane. Its function is as follows. Part of the binding-protein-dependent transport system for oligopeptides; probably responsible for the translocation of the substrate across the membrane. This Streptococcus pneumoniae (strain ATCC BAA-255 / R6) protein is Oligopeptide transport system permease protein AmiD (amiD).